The following is a 914-amino-acid chain: UPF0182 protein Syncc9605_1323 (914 aa).

9 consecutive transmembrane segments (helical) span residues 4–24, 37–57, 81–101, 123–143, 152–172, 195–215, 240–260, 285–305, and 312–332; these read LLLL…WLWF, WLLQ…ARAW, IALL…LDLL, RIGS…MTWL, IVAA…SLAL, FAGL…TLVF, MRLI…LVWL, LPLR…LLLP, and QFLA…TPLT.

This sequence belongs to the UPF0182 family.

It localises to the cell membrane. In Synechococcus sp. (strain CC9605), this protein is UPF0182 protein Syncc9605_1323.